Reading from the N-terminus, the 336-residue chain is Glyceraldehyde-3-phosphate dehydrogenase (336 aa).

NAD(+) contacts are provided by residues arginine 12 to isoleucine 13, aspartate 34, arginine 78, and threonine 121. Residues serine 151–threonine 153, threonine 182, arginine 199, threonine 212–glycine 213, and arginine 235 each bind D-glyceraldehyde 3-phosphate. Residue cysteine 152 is the Nucleophile of the active site. Asparagine 316 contacts NAD(+).

This sequence belongs to the glyceraldehyde-3-phosphate dehydrogenase family. Homotetramer.

The protein localises to the cytoplasm. The catalysed reaction is D-glyceraldehyde 3-phosphate + phosphate + NAD(+) = (2R)-3-phospho-glyceroyl phosphate + NADH + H(+). Its pathway is carbohydrate degradation; glycolysis; pyruvate from D-glyceraldehyde 3-phosphate: step 1/5. Its function is as follows. Catalyzes the oxidative phosphorylation of glyceraldehyde 3-phosphate (G3P) to 1,3-bisphosphoglycerate (BPG) using the cofactor NAD. The first reaction step involves the formation of a hemiacetal intermediate between G3P and a cysteine residue, and this hemiacetal intermediate is then oxidized to a thioester, with concomitant reduction of NAD to NADH. The reduced NADH is then exchanged with the second NAD, and the thioester is attacked by a nucleophilic inorganic phosphate to produce BPG. This chain is Glyceraldehyde-3-phosphate dehydrogenase (gap), found in Streptococcus pyogenes serotype M1.